A 356-amino-acid chain; its full sequence is MELKERLQALKSEAVDKVSQITDKKALQDIKVSYIGKKGVITGLMKEMKSLPNEEKPMFGQLVNDAKQTVESAIAEVEARIEAELVNKRLQSETIDITLPGKKLSPGSSHPLDRIVEDIEDLFIGLGYEIVEGFEVESDHYNFEALNLPKSHPARDMQDSFYISEEVLMRTHTSPVQARTLESRNGEGPVKIICPGKVYRRDSDDATHSHQFTQIEGLVVDENIKMSDLKGTLEYFAKKMFGEDREIRLRPSFFPFTEPSVEVDISCFKCKGKGCNVCKGTGWIEILGAGMVHPNVLEMAGFDSNKYSGFAFGMGPDRIAMLKYGIEDIRHFYTNDLRFIRQFLRLEDGGEPNVSK.

Glu258 is a binding site for Mg(2+).

Belongs to the class-II aminoacyl-tRNA synthetase family. Phe-tRNA synthetase alpha subunit type 1 subfamily. In terms of assembly, tetramer of two alpha and two beta subunits. Requires Mg(2+) as cofactor.

Its subcellular location is the cytoplasm. The catalysed reaction is tRNA(Phe) + L-phenylalanine + ATP = L-phenylalanyl-tRNA(Phe) + AMP + diphosphate + H(+). In Macrococcus caseolyticus (strain JCSC5402) (Macrococcoides caseolyticum), this protein is Phenylalanine--tRNA ligase alpha subunit.